Consider the following 94-residue polypeptide: Small ribosomal subunit protein bS6 (94 aa).

This sequence belongs to the bacterial ribosomal protein bS6 family.

In terms of biological role, binds together with bS18 to 16S ribosomal RNA. This chain is Small ribosomal subunit protein bS6, found in Desulforudis audaxviator (strain MP104C).